Consider the following 1035-residue polypeptide: Translation initiation factor IF-2 (1035 aa).

Basic and acidic residues predominate over residues 56–66 (KDDKSNTDDNK). Disordered regions lie at residues 56-80 (KDDK…SSEA) and 114-402 (ANDA…VIKN). Residues 68-78 (ASAHSVAQHSS) are compositionally biased toward polar residues. Basic and acidic residues-rich tracts occupy residues 114–137 (ANDA…RVET) and 146–200 (LVRE…EIKD). Over residues 219 to 228 (DSATNVNLNE) the composition is skewed to polar residues. The span at 229–238 (SIDKDKKTND) shows a compositional bias: basic and acidic residues. Positions 239-253 (NRQVSTDNSAVNNEE) are enriched in polar residues. Residues 259–315 (LNKKDMDKKNNNKKNEAKKNAEKKNEAKKNEKNDNKGGNAKKNEHRSPDMKKNDSNR) show a composition bias toward basic and acidic residues. Residues 316–325 (PQDANKQNSK) show a composition bias toward polar residues. Composition is skewed to basic and acidic residues over residues 327–347 (AADK…EIPK) and 354–385 (QKEE…KEQP). Residues 537–706 (PRPPVVVVMG…LLAADMLELK (170 aa)) form the tr-type G domain. Positions 546–553 (GHVDHGKT) are G1. Residue 546 to 553 (GHVDHGKT) participates in GTP binding. Positions 571 to 575 (GITQH) are G2. Residues 592 to 595 (DTPG) are G3. GTP is bound by residues 592-596 (DTPGH) and 646-649 (NKID). The interval 646–649 (NKID) is G4. The segment at 682–684 (SAK) is G5.

This sequence belongs to the TRAFAC class translation factor GTPase superfamily. Classic translation factor GTPase family. IF-2 subfamily.

Its subcellular location is the cytoplasm. One of the essential components for the initiation of protein synthesis. Protects formylmethionyl-tRNA from spontaneous hydrolysis and promotes its binding to the 30S ribosomal subunits. Also involved in the hydrolysis of GTP during the formation of the 70S ribosomal complex. The chain is Translation initiation factor IF-2 from Acetivibrio thermocellus (strain ATCC 27405 / DSM 1237 / JCM 9322 / NBRC 103400 / NCIMB 10682 / NRRL B-4536 / VPI 7372) (Clostridium thermocellum).